Consider the following 735-residue polypeptide: 1,4-alpha-glucan branching enzyme GlgB 1 (735 aa).

Catalysis depends on Asp418, which acts as the Nucleophile. Residue Glu471 is the Proton donor of the active site.

Belongs to the glycosyl hydrolase 13 family. GlgB subfamily. In terms of assembly, monomer.

The catalysed reaction is Transfers a segment of a (1-&gt;4)-alpha-D-glucan chain to a primary hydroxy group in a similar glucan chain.. Its pathway is glycan biosynthesis; glycogen biosynthesis. Its function is as follows. Catalyzes the formation of the alpha-1,6-glucosidic linkages in glycogen by scission of a 1,4-alpha-linked oligosaccharide from growing alpha-1,4-glucan chains and the subsequent attachment of the oligosaccharide to the alpha-1,6 position. This chain is 1,4-alpha-glucan branching enzyme GlgB 1, found in Rhizobium johnstonii (strain DSM 114642 / LMG 32736 / 3841) (Rhizobium leguminosarum bv. viciae).